The primary structure comprises 427 residues: Glutamate-1-semialdehyde 2,1-aminomutase (427 aa).

At Lys267 the chain carries N6-(pyridoxal phosphate)lysine.

This sequence belongs to the class-III pyridoxal-phosphate-dependent aminotransferase family. HemL subfamily. Homodimer. It depends on pyridoxal 5'-phosphate as a cofactor.

Its subcellular location is the cytoplasm. It carries out the reaction (S)-4-amino-5-oxopentanoate = 5-aminolevulinate. Its pathway is porphyrin-containing compound metabolism; protoporphyrin-IX biosynthesis; 5-aminolevulinate from L-glutamyl-tRNA(Glu): step 2/2. The protein is Glutamate-1-semialdehyde 2,1-aminomutase of Geobacter metallireducens (strain ATCC 53774 / DSM 7210 / GS-15).